A 357-amino-acid polypeptide reads, in one-letter code: Uroporphyrinogen decarboxylase (357 aa).

Substrate is bound by residues 27–31 (RQAGR), D77, Y154, S209, and H330.

It belongs to the uroporphyrinogen decarboxylase family. Homodimer.

The protein resides in the cytoplasm. It catalyses the reaction uroporphyrinogen III + 4 H(+) = coproporphyrinogen III + 4 CO2. The protein operates within porphyrin-containing compound metabolism; protoporphyrin-IX biosynthesis; coproporphyrinogen-III from 5-aminolevulinate: step 4/4. Catalyzes the decarboxylation of four acetate groups of uroporphyrinogen-III to yield coproporphyrinogen-III. In Acinetobacter baumannii (strain ATCC 17978 / DSM 105126 / CIP 53.77 / LMG 1025 / NCDC KC755 / 5377), this protein is Uroporphyrinogen decarboxylase.